The chain runs to 280 residues: UPF0276 protein NMB2142 (280 aa).

Belongs to the UPF0276 family.

This Neisseria meningitidis serogroup B (strain ATCC BAA-335 / MC58) protein is UPF0276 protein NMB2142.